Here is a 529-residue protein sequence, read N- to C-terminus: Bifunctional purine biosynthesis protein PurH (529 aa).

The region spanning 1–148 is the MGS-like domain; the sequence is MNNARPIRRA…KNHKDTTIIV (148 aa).

Belongs to the PurH family.

The catalysed reaction is (6R)-10-formyltetrahydrofolate + 5-amino-1-(5-phospho-beta-D-ribosyl)imidazole-4-carboxamide = 5-formamido-1-(5-phospho-D-ribosyl)imidazole-4-carboxamide + (6S)-5,6,7,8-tetrahydrofolate. It carries out the reaction IMP + H2O = 5-formamido-1-(5-phospho-D-ribosyl)imidazole-4-carboxamide. It participates in purine metabolism; IMP biosynthesis via de novo pathway; 5-formamido-1-(5-phospho-D-ribosyl)imidazole-4-carboxamide from 5-amino-1-(5-phospho-D-ribosyl)imidazole-4-carboxamide (10-formyl THF route): step 1/1. Its pathway is purine metabolism; IMP biosynthesis via de novo pathway; IMP from 5-formamido-1-(5-phospho-D-ribosyl)imidazole-4-carboxamide: step 1/1. In Shewanella halifaxensis (strain HAW-EB4), this protein is Bifunctional purine biosynthesis protein PurH.